Reading from the N-terminus, the 686-residue chain is Lysophospholipase 3 (686 aa).

An N-terminal signal peptide occupies residues M1–A26. Residues S39 to D592 enclose the PLA2c domain. N-linked (GlcNAc...) asparagine glycans are attached at residues N56, N82, N129, N166, N221, N283, N313, N351, N495, N519, N547, N571, N588, and N614. N659 carries the GPI-anchor amidated asparagine lipid modification. The propeptide at S660–V686 is removed in mature form.

The protein belongs to the lysophospholipase family.

The protein resides in the cell membrane. The catalysed reaction is a 1-acyl-sn-glycero-3-phosphocholine + H2O = sn-glycerol 3-phosphocholine + a fatty acid + H(+). Its function is as follows. Sequentially removes both fatty acyl groups from diacylglycerophospholipids and therefore has both phospholipase A and lysophospholipase activities. Substrate preference is phosphatidylserine &gt; phosphatidylinositol. Does not cleave phosphatidylcholine, phosphatidylethanolamine, phosphatidic acid and phosphatidylinositol-bisphosphate. Mainly responsible for the degradation of phosphatidylinositol in vivo. This is Lysophospholipase 3 (PLB3) from Saccharomyces cerevisiae (strain ATCC 204508 / S288c) (Baker's yeast).